The sequence spans 365 residues: Endophilin-B1 (365 aa).

Met1 bears the N-acetylmethionine mark. The interval 1 to 30 (MNIMDFNVKKLAADAGTFLSRAVQFTEEKL) is membrane-binding amphipathic helix. Residues 1–37 (MNIMDFNVKKLAADAGTFLSRAVQFTEEKLGQAEKTE) are required for membrane binding. The BAR domain maps to 27–261 (EEKLGQAEKT…LGSFPSNYVS (235 aa)). Phosphothreonine; by CDK5 is present on Thr145. Residues 156–185 (KTIAKERKLLQNKRLDLDAAKTRLKKAKAA) adopt a coiled-coil conformation. Positions 305–365 (SSTRKARVLY…VPITYLELLN (61 aa)) constitute an SH3 domain.

This sequence belongs to the endophilin family. Homodimer, and heterodimer with SH3GLB2. Binds BAX; induction of apoptosis augments BAX binding. Binds DNM1, HTT, AMPH, BIN1 and ARFGAP1. Interacts with UVRAG; UVRAG bridges the interaction to BECN1 indicative for an association with the PI3K complex II (PI3KC3-C2). Phosphorylated at Thr-145 by CDK5; this phosphorylation is required for autophagy induction in starved neurons and facilitates homodimerization. In terms of tissue distribution, expressed in brain, heart, lung and spleen. Low level in liver and testis.

Its subcellular location is the cytoplasm. It is found in the golgi apparatus membrane. It localises to the mitochondrion outer membrane. The protein resides in the cytoplasmic vesicle. The protein localises to the autophagosome membrane. Its subcellular location is the midbody. Functionally, may be required for normal outer mitochondrial membrane dynamics. Required for coatomer-mediated retrograde transport in certain cells. May recruit other proteins to membranes with high curvature. May promote membrane fusion. Involved in activation of caspase-dependent apoptosis by promoting BAX/BAK1 activation. Involved in caspase-independent apoptosis during nutrition starvation and involved in the regulation of autophagy. Activates lipid kinase activity of PIK3C3 during autophagy probably by associating with the PI3K complex II (PI3KC3-C2). Associated with PI3KC3-C2 during autophagy may regulate the trafficking of ATG9A from the Golgi complex to the peripheral cytoplasm for the formation of autophagosomes by inducing Golgi membrane tubulation and fragmentation. Involved in regulation of degradative endocytic trafficking and cytokinesis, probably in the context of PI3KC3-C2. In Rattus norvegicus (Rat), this protein is Endophilin-B1.